Consider the following 354-residue polypeptide: Uroporphyrinogen decarboxylase (354 aa).

Substrate contacts are provided by residues 27–31, Asp-77, Tyr-154, Thr-209, and His-327; that span reads RQAGR.

The protein belongs to the uroporphyrinogen decarboxylase family. As to quaternary structure, homodimer.

The protein resides in the cytoplasm. The catalysed reaction is uroporphyrinogen III + 4 H(+) = coproporphyrinogen III + 4 CO2. It participates in porphyrin-containing compound metabolism; protoporphyrin-IX biosynthesis; coproporphyrinogen-III from 5-aminolevulinate: step 4/4. Functionally, catalyzes the decarboxylation of four acetate groups of uroporphyrinogen-III to yield coproporphyrinogen-III. This chain is Uroporphyrinogen decarboxylase, found in Mannheimia succiniciproducens (strain KCTC 0769BP / MBEL55E).